Reading from the N-terminus, the 2091-residue chain is Protein Ycf2 (2091 aa).

The disordered stretch occupies residues 191–210 (DSSQLKGSSDQSRDPLDSIS). 1432-1439 (GSIGTGRS) contacts ATP.

Belongs to the Ycf2 family.

It localises to the plastid. The protein localises to the chloroplast stroma. Functionally, probable ATPase of unknown function. Its presence in a non-photosynthetic plant (Epifagus virginiana) and experiments in tobacco indicate that it has an essential function which is probably not related to photosynthesis. The sequence is that of Protein Ycf2 from Daucus carota (Wild carrot).